The following is a 177-amino-acid chain: 3-hydroxydecanoyl-[acyl-carrier-protein] dehydratase (177 aa).

Residue histidine 76 is part of the active site.

It belongs to the thioester dehydratase family. FabA subfamily. In terms of assembly, homodimer.

Its subcellular location is the cytoplasm. The catalysed reaction is a (3R)-hydroxyacyl-[ACP] = a (2E)-enoyl-[ACP] + H2O. It catalyses the reaction (3R)-hydroxydecanoyl-[ACP] = (2E)-decenoyl-[ACP] + H2O. The enzyme catalyses (2E)-decenoyl-[ACP] = (3Z)-decenoyl-[ACP]. It functions in the pathway lipid metabolism; fatty acid biosynthesis. In terms of biological role, necessary for the introduction of cis unsaturation into fatty acids. Catalyzes the dehydration of (3R)-3-hydroxydecanoyl-ACP to E-(2)-decenoyl-ACP and then its isomerization to Z-(3)-decenoyl-ACP. Can catalyze the dehydratase reaction for beta-hydroxyacyl-ACPs with saturated chain lengths up to 16:0, being most active on intermediate chain length. In Actinobacillus succinogenes (strain ATCC 55618 / DSM 22257 / CCUG 43843 / 130Z), this protein is 3-hydroxydecanoyl-[acyl-carrier-protein] dehydratase.